We begin with the raw amino-acid sequence, 337 residues long: MRNITISAYTPTEFTIENISDTVAKISAWPFEIGYGITLAHPLRRLLYTSTVGYAPTAIHIDGVAHEFDSMRGMLEDVALFIINLKKLRFKIKSDSNKEIVEFSFKGSKEIYGKDLNNDQVEVVNKDAYLATINEDAELEFTLIVEKGIGYIPSEEIKEFLNDPKFIALDAFFTPVREATYDIEKVLFEDNPDYEKVVLTVTTDGQITPNEAFQNALEAMYKQLSVFDKITNVRSVIKNQATSNELENTKLLQNITDLNLSARSYNCLEKAGVVYIGELALMSVSELAGLKNLGKKSLDEIKNIMENIGFPVGTSKLSDNKEILKNKIAELKAQNEG.

Residues M1–T231 are alpha N-terminal domain (alpha-NTD). Residues N248–G337 are alpha C-terminal domain (alpha-CTD).

It belongs to the RNA polymerase alpha chain family. As to quaternary structure, homodimer. The RNAP catalytic core consists of 2 alpha, 1 beta, 1 beta' and 1 omega subunit. When a sigma factor is associated with the core the holoenzyme is formed, which can initiate transcription.

The enzyme catalyses RNA(n) + a ribonucleoside 5'-triphosphate = RNA(n+1) + diphosphate. Its function is as follows. DNA-dependent RNA polymerase catalyzes the transcription of DNA into RNA using the four ribonucleoside triphosphates as substrates. This is DNA-directed RNA polymerase subunit alpha from Campylobacter jejuni subsp. doylei (strain ATCC BAA-1458 / RM4099 / 269.97).